The primary structure comprises 145 residues: D-aminoacyl-tRNA deacylase (145 aa).

Residues 137–138 (GP) carry the Gly-cisPro motif, important for rejection of L-amino acids motif.

It belongs to the DTD family. In terms of assembly, homodimer.

The protein resides in the cytoplasm. The enzyme catalyses glycyl-tRNA(Ala) + H2O = tRNA(Ala) + glycine + H(+). The catalysed reaction is a D-aminoacyl-tRNA + H2O = a tRNA + a D-alpha-amino acid + H(+). In terms of biological role, an aminoacyl-tRNA editing enzyme that deacylates mischarged D-aminoacyl-tRNAs. Also deacylates mischarged glycyl-tRNA(Ala), protecting cells against glycine mischarging by AlaRS. Acts via tRNA-based rather than protein-based catalysis; rejects L-amino acids rather than detecting D-amino acids in the active site. By recycling D-aminoacyl-tRNA to D-amino acids and free tRNA molecules, this enzyme counteracts the toxicity associated with the formation of D-aminoacyl-tRNA entities in vivo and helps enforce protein L-homochirality. This chain is D-aminoacyl-tRNA deacylase, found in Shewanella sediminis (strain HAW-EB3).